Here is a 587-residue protein sequence, read N- to C-terminus: NADH-quinone oxidoreductase subunit C/D (587 aa).

Residues 1–178 (MAAPTTEHAE…EPFSLPDDVQ (178 aa)) are NADH dehydrogenase I subunit C. An NADH dehydrogenase I subunit D region spans residues 202–587 (DFLFLNLGPN…IDFVMADVDR (386 aa)).

The protein in the N-terminal section; belongs to the complex I 30 kDa subunit family. In the C-terminal section; belongs to the complex I 49 kDa subunit family. As to quaternary structure, NDH-1 is composed of 13 different subunits. Subunits NuoB, CD, E, F, and G constitute the peripheral sector of the complex.

The protein resides in the cell inner membrane. It catalyses the reaction a quinone + NADH + 5 H(+)(in) = a quinol + NAD(+) + 4 H(+)(out). NDH-1 shuttles electrons from NADH, via FMN and iron-sulfur (Fe-S) centers, to quinones in the respiratory chain. The immediate electron acceptor for the enzyme in this species is believed to be ubiquinone. Couples the redox reaction to proton translocation (for every two electrons transferred, four hydrogen ions are translocated across the cytoplasmic membrane), and thus conserves the redox energy in a proton gradient. This Methylococcus capsulatus (strain ATCC 33009 / NCIMB 11132 / Bath) protein is NADH-quinone oxidoreductase subunit C/D.